The following is a 352-amino-acid chain: Photosystem II D2 protein (352 aa).

The residue at position 2 (threonine 2) is an N-acetylthreonine. The residue at position 2 (threonine 2) is a Phosphothreonine. The chain crosses the membrane as a helical span at residues 40–60 (CAYMALGGWLTGTTFVTSWYT). A chlorophyll a-binding site is contributed by histidine 117. The helical transmembrane segment at 124–140 (GFMLRQFEIAQSLKLRP) threads the bilayer. Pheophytin a is bound by residues glutamine 129 and asparagine 142. Residues 152-165 (VFVSVFLIYPLGQA) form a helical membrane-spanning segment. Residue histidine 197 coordinates chlorophyll a. A helical membrane pass occupies residues 207 to 227 (AALLCAIHGATVENTLFEDGD). Positions 214 and 261 each coordinate a plastoquinone. Histidine 214 serves as a coordination point for Fe cation. Residue histidine 268 coordinates Fe cation. A helical membrane pass occupies residues 278–294 (GLWMSAIGVVGLALNLR).

It belongs to the reaction center PufL/M/PsbA/D family. In terms of assembly, PSII is composed of 1 copy each of membrane proteins PsbA, PsbB, PsbC, PsbD, PsbE, PsbF, PsbH, PsbI, PsbJ, PsbK, PsbL, PsbM, PsbT, PsbX, PsbY, PsbZ, Psb30/Ycf12, at least 3 peripheral proteins of the oxygen-evolving complex and a large number of cofactors. It forms dimeric complexes. The cofactor is The D1/D2 heterodimer binds P680, chlorophylls that are the primary electron donor of PSII, and subsequent electron acceptors. It shares a non-heme iron and each subunit binds pheophytin, quinone, additional chlorophylls, carotenoids and lipids. There is also a Cl(-1) ion associated with D1 and D2, which is required for oxygen evolution. The PSII complex binds additional chlorophylls, carotenoids and specific lipids..

The protein resides in the plastid. Its subcellular location is the chloroplast thylakoid membrane. The catalysed reaction is 2 a plastoquinone + 4 hnu + 2 H2O = 2 a plastoquinol + O2. Functionally, photosystem II (PSII) is a light-driven water:plastoquinone oxidoreductase that uses light energy to abstract electrons from H(2)O, generating O(2) and a proton gradient subsequently used for ATP formation. It consists of a core antenna complex that captures photons, and an electron transfer chain that converts photonic excitation into a charge separation. The D1/D2 (PsbA/PsbD) reaction center heterodimer binds P680, the primary electron donor of PSII as well as several subsequent electron acceptors. D2 is needed for assembly of a stable PSII complex. This is Photosystem II D2 protein from Stigeoclonium helveticum (Green alga).